Here is a 441-residue protein sequence, read N- to C-terminus: G2/mitotic-specific cyclin-2 (441 aa).

The protein belongs to the cyclin family. Cyclin AB subfamily. As to quaternary structure, interacts with the CDC2 and CDK2 protein kinases to form a serine/threonine kinase holoenzyme complex. The cyclin subunit imparts substrate specificity to the complex.

Functionally, essential for the control of the cell cycle at the G2/M (mitosis) transition. G2/M cyclins accumulate steadily during G2 and are abruptly destroyed at mitosis. This chain is G2/mitotic-specific cyclin-2, found in Antirrhinum majus (Garden snapdragon).